Consider the following 2280-residue polypeptide: Acetyl-CoA carboxylase (2280 aa).

In terms of domain architecture, Biotin carboxylation spans 68-577; that stretch reads VITSILIANN…TTGWLDRLIA (510 aa). In terms of domain architecture, ATP-grasp spans 226 to 418; sequence ETNIVTVDDD…LPAAQLQVAM (193 aa). Residue 266 to 271 coordinates ATP; the sequence is GGGGKG. Glutamate 375, glutamate 389, and asparagine 391 together coordinate Mn(2+). Residue arginine 393 is part of the active site. Residues 704 to 778 form the Biotinyl-binding domain; sequence LEQENDPTQL…DAGDILGILT (75 aa). Position 745 is an N6-biotinyllysine (lysine 745). A phosphoserine mark is found at serine 1179 and serine 1181. One can recognise a CoA carboxyltransferase N-terminal domain in the interval 1524 to 1863; it reads PYPTKEWLQP…KRNNPVPISP (340 aa). Positions 1524 to 2181 are carboxyltransferase; that stretch reads PYPTKEWLQP…EHYALQKITQ (658 aa). Residues arginine 1772, lysine 2074, and arginine 2076 each coordinate CoA. Residues 1867-2181 enclose the CoA carboxyltransferase C-terminal domain; the sequence is TWDRDVEFYP…EHYALQKITQ (315 aa).

As to quaternary structure, interacts with sad1. The cofactor is biotin. Mn(2+) is required as a cofactor.

The protein resides in the cytoplasm. The enzyme catalyses hydrogencarbonate + acetyl-CoA + ATP = malonyl-CoA + ADP + phosphate + H(+). The catalysed reaction is N(6)-biotinyl-L-lysyl-[protein] + hydrogencarbonate + ATP = N(6)-carboxybiotinyl-L-lysyl-[protein] + ADP + phosphate + H(+). It functions in the pathway lipid metabolism; malonyl-CoA biosynthesis; malonyl-CoA from acetyl-CoA: step 1/1. Its activity is regulated as follows. By phosphorylation. In terms of biological role, carries out three functions: biotin carboxyl carrier protein, biotin carboxylase and carboxyltransferase. The sequence is that of Acetyl-CoA carboxylase (cut6) from Schizosaccharomyces pombe (strain 972 / ATCC 24843) (Fission yeast).